The following is a 292-amino-acid chain: Ferric aerobactin-binding protein VatD (292 aa).

Positions Met1 to Ala12 are cleaved as a signal peptide. Positions Lys30–Gln292 constitute a Fe/B12 periplasmic-binding domain. The desferrioxamine B site is built by Trp61, Arg77, Tyr118, Arg185, Trp213, Phe215, Trp269, and Phe271.

Belongs to the bacterial solute-binding protein 8 family. As to quaternary structure, the complex is composed of two ATP-binding proteins (VatC), two transmembrane proteins (VatB) and a solute-binding protein (VatD).

Its subcellular location is the periplasm. Part of the ABC transporter complex VatCDB involved in the import of iron(3+)-complexed aerobactin, a citrate-hydroxamate siderophore produced by other bacteria. Binds the iron(3+)-aerobactin complex and transfers it to the membrane-bound permease. Functions in the import of iron(3+)-complexed vulnibactin, a catecholate siderophore synthesized by V.vulnificus, in the absence of FatB. In Vibrio vulnificus, this protein is Ferric aerobactin-binding protein VatD.